A 323-amino-acid chain; its full sequence is Magnesium transporter NIPA1 (323 aa).

At 1 to 21 (MGTAAAAAAAGEGARGPSPAA) the chain is on the extracellular side. The helical transmembrane segment at 22-42 (VSLGLGVAVVSSLVNGSTFVL) threads the bilayer. Over 43–60 (QKKGIVRAKRRGTSYLTD) the chain is Cytoplasmic. Residues 61–81 (IVWWAGTIAMAVGQIGNFLAY) form a helical membrane-spanning segment. Residue threonine 82 is a topological domain, extracellular. Residues 83 to 103 (AVPTVLVTPLGALGVPFGSIL) traverse the membrane as a helical segment. Topologically, residues 104-111 (ASYLLKEK) are cytoplasmic. Residues 112 to 132 (LNILGKLGCLLSCAGSVVLII) traverse the membrane as a helical segment. Residues 133–153 (HSPKSESVTTQAELEEKLTNP) are Extracellular-facing. Residues 154 to 174 (VFVGYLCIVLLMLLLLIFWIA) traverse the membrane as a helical segment. The Cytoplasmic portion of the chain corresponds to 175–177 (PAH). The chain crosses the membrane as a helical span at residues 178-198 (GPTNIMVYISICSLLGSFTVP). Residues 199-218 (STKGIGLAAQDILHNNPSSQ) lie on the Extracellular side of the membrane. Residues 219 to 239 (RALCLCLVLLAVLGCSIIVQF) form a helical membrane-spanning segment. The Cytoplasmic segment spans residues 240-253 (RYINKALECFDSSV). A helical transmembrane segment spans residues 254–274 (FGAIYYVVFTTLVLLASAILF). Residues 275-284 (REWSNVGLVD) are Extracellular-facing. A helical transmembrane segment spans residues 285–305 (FLGMACGFTTVSVGIVLIQVF). The Cytoplasmic portion of the chain corresponds to 306–323 (KEFNFNLGEMNKSNMKTD).

This sequence belongs to the NIPA family. Homodimer. In terms of tissue distribution, widely expressed. Predominantly expressed in neuronal tissues. Brain, heart, kidney, liver and colon (at protein level).

Its subcellular location is the cell membrane. It localises to the early endosome. The enzyme catalyses Mg(2+)(in) = Mg(2+)(out). Acts as a Mg(2+) transporter. Can also transport other divalent cations such as Fe(2+), Sr(2+), Ba(2+), Zn(2+) and Co(2+) but to a much less extent than Mg(2+). This chain is Magnesium transporter NIPA1 (Nipa1), found in Mus musculus (Mouse).